Consider the following 414-residue polypeptide: Lipoyl synthase, mitochondrial (414 aa).

The N-terminal 18 residues, 1–18 (MYRRSVGVLFVGRNTRWI), are a transit peptide targeting the mitochondrion. Polar residues predominate over residues 51–67 (GNSTEVENATSQLTGTS). A disordered region spans residues 51–75 (GNSTEVENATSQLTGTSGKRRKGNR). C150, C155, C161, C181, C185, C188, and S396 together coordinate [4Fe-4S] cluster. The 222-residue stretch at 164-385 (GKDKSKATAT…KERALEMGFL (222 aa)) folds into the Radical SAM core domain.

This sequence belongs to the radical SAM superfamily. Lipoyl synthase family. It depends on [4Fe-4S] cluster as a cofactor.

Its subcellular location is the mitochondrion. The enzyme catalyses [[Fe-S] cluster scaffold protein carrying a second [4Fe-4S](2+) cluster] + N(6)-octanoyl-L-lysyl-[protein] + 2 oxidized [2Fe-2S]-[ferredoxin] + 2 S-adenosyl-L-methionine + 4 H(+) = [[Fe-S] cluster scaffold protein] + N(6)-[(R)-dihydrolipoyl]-L-lysyl-[protein] + 4 Fe(3+) + 2 hydrogen sulfide + 2 5'-deoxyadenosine + 2 L-methionine + 2 reduced [2Fe-2S]-[ferredoxin]. It functions in the pathway protein modification; protein lipoylation via endogenous pathway; protein N(6)-(lipoyl)lysine from octanoyl-[acyl-carrier-protein]: step 2/2. In terms of biological role, catalyzes the radical-mediated insertion of two sulfur atoms into the C-6 and C-8 positions of the octanoyl moiety bound to the lipoyl domains of lipoate-dependent enzymes, thereby converting the octanoylated domains into lipoylated derivatives. The polypeptide is Lipoyl synthase, mitochondrial (Saccharomyces cerevisiae (strain RM11-1a) (Baker's yeast)).